Consider the following 63-residue polypeptide: Juvenile hormone esterase, isoform B (63 aa).

An N-linked (GlcNAc...) asparagine glycan is attached at asparagine 20.

It belongs to the type-B carboxylesterase/lipase family. Fat body, the site of their biosynthesis, and the hemolymph where it is secreted.

The enzyme catalyses juvenile hormone I + H2O = juvenile hormone I carboxylate + methanol + H(+). It catalyses the reaction juvenile hormone III + H2O = juvenile hormone III carboxylate + methanol + H(+). JH esterase plays a crucial role in the decrease of JH activity in lepidopteran insects, by hydrolyzing the methyl ester of JH. It is also involved in the transport of JH. This Trichoplusia ni (Cabbage looper) protein is Juvenile hormone esterase, isoform B.